We begin with the raw amino-acid sequence, 58 residues long: Small ribosomal subunit protein bS21 (58 aa).

The interval 30-58 (SEVRKREHYEKPSVKRKKKSEAARKRKFK) is disordered. A compositionally biased stretch (basic and acidic residues) spans 31–42 (EVRKREHYEKPS). Residues 43–58 (VKRKKKSEAARKRKFK) are compositionally biased toward basic residues.

This sequence belongs to the bacterial ribosomal protein bS21 family.

This Clostridium perfringens (strain ATCC 13124 / DSM 756 / JCM 1290 / NCIMB 6125 / NCTC 8237 / Type A) protein is Small ribosomal subunit protein bS21.